The primary structure comprises 250 residues: Large ribosomal subunit protein uL30B (250 aa).

It belongs to the universal ribosomal protein uL30 family. In terms of assembly, component of the large ribosomal subunit (LSU). Mature yeast ribosomes consist of a small (40S) and a large (60S) subunit. The 40S small subunit contains 1 molecule of ribosomal RNA (18S rRNA) and at least 33 different proteins. The large 60S subunit contains 3 rRNA molecules (25S, 5.8S and 5S rRNA) and at least 46 different proteins.

It is found in the cytoplasm. The protein localises to the nucleus. Its subcellular location is the nucleolus. Component of the ribosome, a large ribonucleoprotein complex responsible for the synthesis of proteins in the cell. The small ribosomal subunit (SSU) binds messenger RNAs (mRNAs) and translates the encoded message by selecting cognate aminoacyl-transfer RNA (tRNA) molecules. The large subunit (LSU) contains the ribosomal catalytic site termed the peptidyl transferase center (PTC), which catalyzes the formation of peptide bonds, thereby polymerizing the amino acids delivered by tRNAs into a polypeptide chain. The nascent polypeptides leave the ribosome through a tunnel in the LSU and interact with protein factors that function in enzymatic processing, targeting, and the membrane insertion of nascent chains at the exit of the ribosomal tunnel. The protein is Large ribosomal subunit protein uL30B (rpl702) of Schizosaccharomyces pombe (strain 972 / ATCC 24843) (Fission yeast).